The chain runs to 159 residues: Transcriptional repressor NrdR (159 aa).

Residues 3 to 34 (CPFCRHEDTQVVDSRVSEDGAAIRRRRRCSAC) fold into a zinc finger. The region spanning 49-139 (PAVVKKDGSR…VYRRFEDVSE (91 aa)) is the ATP-cone domain.

The protein belongs to the NrdR family. It depends on Zn(2+) as a cofactor.

In terms of biological role, negatively regulates transcription of bacterial ribonucleotide reductase nrd genes and operons by binding to NrdR-boxes. The protein is Transcriptional repressor NrdR of Burkholderia ambifaria (strain MC40-6).